A 169-amino-acid polypeptide reads, in one-letter code: Der GTPase-activating protein YihI (169 aa).

Disordered stretches follow at residues 1–98 (MKPS…PQAE) and 144–169 (GLSYDDDEEEEEDEKQEDMMRLLRGN). The span at 10–19 (SKGHAKARRK) shows a compositional bias: basic residues. A compositionally biased stretch (basic and acidic residues) spans 20-30 (TREELDQEARD). The segment covering 31–40 (RKRLKKRRGH) has biased composition (basic residues). Residues 49–58 (GNTTSGSKGQ) are compositionally biased toward polar residues. Over residues 147 to 159 (YDDDEEEEEDEKQ) the composition is skewed to acidic residues. Residues 160–169 (EDMMRLLRGN) show a composition bias toward basic and acidic residues.

Belongs to the YihI family. Interacts with Der.

In terms of biological role, a GTPase-activating protein (GAP) that modifies Der/EngA GTPase function. May play a role in ribosome biogenesis. The polypeptide is Der GTPase-activating protein YihI (Escherichia coli O6:K15:H31 (strain 536 / UPEC)).